We begin with the raw amino-acid sequence, 391 residues long: BRCA1-A complex subunit Abraxas 1 (391 aa).

In terms of domain architecture, MPN spans 8–156 (VRISGFVLSS…THRLEFSAFI (149 aa)). The stretch at 223 to 261 (LLAEMQKVCVEVEKSERTVEKLQEDIAQLKEAIGKQKTH) forms a coiled coil. Positions 354 to 391 (QRLKRKRKTREVSESASESGSDTEIEMNGQSGSNSPVF) are disordered. Residues 367-391 (ESASESGSDTEIEMNGQSGSNSPVF) show a composition bias toward polar residues. Position 388 is a phosphoserine (serine 388). The pSXXF motif signature appears at 388-391 (SPVF).

Belongs to the FAM175 family. Abraxas subfamily. Component of the ARISC complex. Component of the BRCA1-A complex. Homodimer. Post-translationally, phosphorylation of Ser-388 of the pSXXF motif by ATM or ATR constitutes a specific recognition motif for the BRCT domain of BRCA1.

The protein localises to the nucleus. Its function is as follows. Involved in DNA damage response and double-strand break (DSB) repair. Component of the BRCA1-A complex, acting as a central scaffold protein that assembles the various components of the complex. The BRCA1-A complex specifically recognizes 'Lys-63'-linked ubiquitinated histones H2A and H2AX at DNA lesion sites. This complex also possesses deubiquitinase activity that specifically removes 'Lys-63'-linked ubiquitin on histones H2A and H2AX. This is BRCA1-A complex subunit Abraxas 1 from Danio rerio (Zebrafish).